The following is a 295-amino-acid chain: Protoheme IX farnesyltransferase (295 aa).

9 helical membrane-spanning segments follow: residues 24 to 43 (IMYLVVFTAVAGMVAAPGSI), 47 to 69 (LALISLICIALGSGSAGAINMWY), 94 to 114 (SALEFGVTIGVLSVFIMAIAV), 117 to 137 (ISAILLAIGILFYIFIYTIWL), 144 to 164 (NIVIGGASGAFPPVIGWAVVT), 171 to 191 (GFVLFLIIFMWTPPHFWALSL), 216 to 236 (KYILVYSVLLVLTSLLPALFL), 241 to 261 (FYLGMAIFGGCIFIWHAVSIM), and 272 to 292 (MFSYSISYLFFLFASIILCSI).

Belongs to the UbiA prenyltransferase family. Protoheme IX farnesyltransferase subfamily.

It localises to the cell membrane. The enzyme catalyses heme b + (2E,6E)-farnesyl diphosphate + H2O = Fe(II)-heme o + diphosphate. The protein operates within porphyrin-containing compound metabolism; heme O biosynthesis; heme O from protoheme: step 1/1. Converts heme B (protoheme IX) to heme O by substitution of the vinyl group on carbon 2 of heme B porphyrin ring with a hydroxyethyl farnesyl side group. In Wolbachia sp. subsp. Brugia malayi (strain TRS), this protein is Protoheme IX farnesyltransferase.